A 953-amino-acid chain; its full sequence is Coiled-coil domain-containing protein 14 (953 aa).

Basic residues predominate over residues 1–21 (MKRGIRRDPFRKRKLGGRAKK). Disordered regions lie at residues 1 to 22 (MKRG…AKKV) and 52 to 72 (SGAR…AKLT). Serine 124 is modified (phosphoserine). 2 disordered regions span residues 126–189 (SETA…TSDL) and 268–287 (PPCP…SQFA). The segment covering 145 to 154 (YGSKKKRHEK) has biased composition (basic residues). Positions 169-187 (DNKKQIPNEASARSERDTS) are enriched in basic and acidic residues. Residues 277-287 (EVQTDGNSQFA) show a composition bias toward polar residues. Coiled coils occupy residues 383–413 (LATN…RDTK) and 483–618 (AMQP…AEKE). A phosphoserine mark is found at serine 670, serine 754, and serine 798.

In terms of assembly, interacts with CEP63.

Its subcellular location is the cytoplasm. The protein resides in the cytoskeleton. The protein localises to the microtubule organizing center. It localises to the centrosome. It is found in the centriolar satellite. Functionally, negatively regulates centriole duplication. Negatively regulates CEP63 and CDK2 centrosomal localization. The chain is Coiled-coil domain-containing protein 14 (CCDC14) from Homo sapiens (Human).